The following is a 207-amino-acid chain: U1 small nuclear ribonucleoprotein C (207 aa).

A Matrin-type zinc finger spans residues 4–36; that stretch reads YYCDYCDTYLTHDSPSVRKQHNAGYKHKANVRI. 2 stretches are compositionally biased toward pro residues: residues 105-115 and 122-131; these read PPQGYMPPPGV and PGAPLPPPPQ. Positions 105 to 207 are disordered; that stretch reads PPQGYMPPPG…PSAESPESNE (103 aa). The segment covering 132–144 has biased composition (low complexity); it reads NGILRPPGMAPIP. A compositionally biased stretch (pro residues) spans 162 to 183; sequence GPPPNYNGLPPPPPYHTNPAAP. Residues 184-207 are compositionally biased toward low complexity; that stretch reads PSGNFNNPNLNNPNPSAESPESNE.

It belongs to the U1 small nuclear ribonucleoprotein C family. In terms of assembly, U1 snRNP is composed of the 7 core Sm proteins B/B', D1, D2, D3, E, F and G that assemble in a heptameric protein ring on the Sm site of the small nuclear RNA to form the core snRNP, and at least 3 U1 snRNP-specific proteins U1-70K, U1-A and U1-C. U1-C interacts with U1 snRNA and the 5' splice-site region of the pre-mRNA.

It localises to the nucleus. Its function is as follows. Component of the spliceosomal U1 snRNP, which is essential for recognition of the pre-mRNA 5' splice-site and the subsequent assembly of the spliceosome. U1-C is directly involved in initial 5' splice-site recognition for both constitutive and regulated alternative splicing. The interaction with the 5' splice-site seems to precede base-pairing between the pre-mRNA and the U1 snRNA. Stimulates commitment or early (E) complex formation by stabilizing the base pairing of the 5' end of the U1 snRNA and the 5' splice-site region. The polypeptide is U1 small nuclear ribonucleoprotein C (Arabidopsis thaliana (Mouse-ear cress)).